We begin with the raw amino-acid sequence, 4421 residues long: Replicase polyprotein 1a (4421 aa).

Residues Tyr54–Tyr174 form the CoV Nsp1 globular domain. The 31-residue stretch at Phe192–Gly222 folds into the BetaCoV Nsp1 C-terminal domain. The region spanning Val226–Tyr488 is the CoV Nsp2 N-terminal domain. Residues Cys365, Cys370, Cys386, and Cys389 each contribute to the Zn(2+) site. Residues Cys365 to Cys389 are C4. Positions Cys493 to Leu681 constitute a CoV Nsp2 middle domain. Residues Leu697–Ala809 form the CoV Nsp2 C-terminal domain. In terms of domain architecture, Ubiquitin-like 1 spans Arg811 to Val923. 9 tandem repeats follow at residues Asn945–Asp954, Asn955–Asp964, Asn965–Asp974, Asn975–Asp984, Asn985–Asp994, Asn995–Asp1004, Asn1005–Asp1014, Asn1015–Asp1024, and Asn1025–Asp1034. The segment at Asn945–Asp1034 is 9 X 10 AA tandem repeat of N-[DN]-D-E-D-V-V-T-G-D. Residues Asp947–Thr1042 are disordered. Residues Val1073–Asn1323 enclose the Peptidase C16 1 domain. Cys1111 (for PL1-PRO activity) is an active-site residue. 4 residues coordinate Zn(2+): Cys1188, Cys1191, Cys1214, and Cys1216. A C4-type 1 zinc finger spans residues Cys1188–Cys1216. Residues His1262 and Asp1273 each act as for PL1-PRO activity in the active site. Positions Glu1301 to Val1472 constitute a Macro domain. One can recognise a DPUP domain in the interval Asn1528–Ala1599. The region spanning Ala1599–Gln1654 is the Ubiquitin-like 2 domain. Positions Ser1668 to Gln1928 constitute a Peptidase C16 2 domain. Residue Cys1707 is the For PL2-PRO activity of the active site. 4 residues coordinate Zn(2+): Cys1785, Cys1787, Cys1819, and Cys1821. A C4-type 2 zinc finger spans residues Cys1785–Cys1821. Residues His1864 and Asp1878 each act as for PL2-PRO activity in the active site. A Nucleic acid-binding domain is found at Ile1942–Ser2043. The region spanning Glu2058–Glu2207 is the G2M domain. 3 helical membrane passes run Ala2176 to Phe2196, Phe2237 to Phe2257, and Phe2268 to Ile2288. An HD1 region spans residues Ala2176–Val2413. The 62-residue stretch at Gly2273–Asp2334 folds into the 3Ecto domain. 2 disulfides stabilise this stretch: Cys2289/Cys2313 and Cys2304/Cys2310. 2 consecutive transmembrane segments (helical) span residues Leu2351 to Leu2371 and Phe2393 to Val2413. The interval Gly2421 to Asp2511 is Y1. Residues Gly2421–Gly2788 form the CoV Nsp3 Y domain. Zn(2+) contacts are provided by His2425, Cys2430, Cys2435, Cys2438, Cys2471, His2474, Cys2478, and Cys2481. The interval His2425–Cys2438 is ZF1. A ZF2 region spans residues Cys2471 to Cys2481. A Y2 region spans residues Ala2512–Ala2604. The coV-Y stretch occupies residues Ala2512 to Gly2788. A Y3 region spans residues Cys2605–Gly2687. The segment at Leu2688–Gly2788 is Y4. Transmembrane regions (helical) follow at residues Leu2794–Pro2814, Ala3069–Ile3089, Val3101–Val3121, Val3128–Met3148, and Ile3153–Ile3173. An HD2 region spans residues Leu2794–Ile3173. The 98-residue stretch at Ile3187 to Gln3284 folds into the Nsp4C domain. The Peptidase C30 domain occupies Ser3285–Gln3587. Active-site for 3CL-PRO activity residues include His3325 and Cys3429. Transmembrane regions (helical) follow at residues Ile3601–Phe3621, Thr3626–Val3646, Phe3651–Val3671, Phe3694–Thr3714, Ile3722–Gly3742, Leu3750–Ile3770, and Leu3793–Ser3813. The HD3 stretch occupies residues Ile3601–Ser3813. The region spanning Ser3875–Gln3963 is the RdRp Nsp7 cofactor domain. The RdRp Nsp8 cofactor domain maps to Ala3964 to Gln4160. The Nsp9 ssRNA-binding domain occupies Asn4161 to Gln4270. Positions Ala4271 to Ser4408 constitute an ExoN/MTase coactivator domain. Cys4344, Cys4347, His4353, Cys4360, Cys4386, Cys4389, Cys4397, and Cys4399 together coordinate Zn(2+). 2 zinc fingers span residues Cys4344–Cys4360 and Cys4386–Cys4399.

It belongs to the coronaviruses polyprotein 1ab family. In terms of assembly, 3CL-PRO exists as monomer and homodimer. Eight copies of nsp7 and eight copies of nsp8 assemble to form a heterohexadecamer. Nsp9 is a dimer. Nsp10 forms a dodecamer. In terms of processing, specific enzymatic cleavages in vivo by its own proteases yield mature proteins. 3CL-PRO and PL-PRO proteinases are autocatalytically processed.

The protein resides in the host membrane. Its subcellular location is the host cytoplasm. It is found in the host perinuclear region. It catalyses the reaction Thiol-dependent hydrolysis of ester, thioester, amide, peptide and isopeptide bonds formed by the C-terminal Gly of ubiquitin (a 76-residue protein attached to proteins as an intracellular targeting signal).. It carries out the reaction TSAVLQ-|-SGFRK-NH2 and SGVTFQ-|-GKFKK the two peptides corresponding to the two self-cleavage sites of the SARS 3C-like proteinase are the two most reactive peptide substrates. The enzyme exhibits a strong preference for substrates containing Gln at P1 position and Leu at P2 position.. The catalysed reaction is a 5'-end diphospho-ribonucleoside in mRNA + GTP + H(+) = a 5'-end (5'-triphosphoguanosine)-ribonucleoside in mRNA + diphosphate. In terms of biological role, the papain-like proteinase 1 (PL1-PRO) and papain-like proteinase 2 (PL2-PRO) are responsible for the cleavages located at the N-terminus of the replicase polyprotein. In addition, PLP2 possesses a deubiquitinating/deISGylating activity and processes both 'Lys-48'- and 'Lys-63'-linked polyubiquitin chains from cellular substrates. Antagonizes innate immune induction of type I interferon by blocking the phosphorylation, dimerization and subsequent nuclear translocation of host IRF-3. Functionally, responsible for the majority of cleavages as it cleaves the C-terminus of replicase polyprotein at 11 sites. Recognizes substrates containing the core sequence [ILMVF]-Q-|-[SGACN]. Inhibited by the substrate-analog Cbz-Val-Asn-Ser-Thr-Leu-Gln-CMK. Also contains an ADP-ribose-1''-phosphate (ADRP)-binding function. Nsp7-nsp8 hexadecamer may possibly confer processivity to the polymerase, maybe by binding to dsRNA or by producing primers utilized by the latter. Its function is as follows. Catalytic subunit of viral RNA capping enzyme which catalyzes the RNA guanylyltransferase reaction for genomic and sub-genomic RNAs. The kinase-like NiRAN domain of NSP12 transfers RNA to the amino terminus of NSP9, forming a covalent RNA-protein intermediate. Subsequently, the NiRAN domain transfers RNA to GDP, forming the core cap structure GpppA-RNA. The NSP14 and NSP16 methyltransferases then add methyl groups to form functional cap structures. In terms of biological role, binds to the 40S ribosomal subunit and inhibits host translation. The nsp1-40S ribosome complex further induces an endonucleolytic cleavage near the 5'UTR of host mRNAs, targeting them for degradation. By suppressing host gene expression, nsp1 facilitates efficient viral gene expression in infected cells and evasion from host immune response. The sequence is that of Replicase polyprotein 1a from Human coronavirus HKU1 (isolate N5) (HCoV-HKU1).